A 469-amino-acid chain; its full sequence is Putative pyridoxal-dependent decarboxylase domain-containing protein 2 (469 aa).

A coiled-coil region spans residues 12-40; the sequence is TLAEMGKNLKEAVKMLEDSQRRTEEENGK. Residues 28–44 are compositionally biased toward basic and acidic residues; it reads EDSQRRTEEENGKKLIS. Residues 28 to 47 are disordered; sequence EDSQRRTEEENGKKLISRDI.

It belongs to the group II decarboxylase family. Pyridoxal 5'-phosphate serves as cofactor.

In Homo sapiens (Human), this protein is Putative pyridoxal-dependent decarboxylase domain-containing protein 2 (PDXDC2P).